The chain runs to 244 residues: Carboxy-S-adenosyl-L-methionine synthase (244 aa).

Residues tyrosine 38, 63-65 (GCS), 88-89 (DN), 116-117 (DI), asparagine 131, and arginine 198 contribute to the S-adenosyl-L-methionine site.

This sequence belongs to the class I-like SAM-binding methyltransferase superfamily. Cx-SAM synthase family. In terms of assembly, homodimer.

It catalyses the reaction prephenate + S-adenosyl-L-methionine = carboxy-S-adenosyl-L-methionine + 3-phenylpyruvate + H2O. In terms of biological role, catalyzes the conversion of S-adenosyl-L-methionine (SAM) to carboxy-S-adenosyl-L-methionine (Cx-SAM). This Haemophilus ducreyi (strain 35000HP / ATCC 700724) protein is Carboxy-S-adenosyl-L-methionine synthase.